A 328-amino-acid chain; its full sequence is GTPase Obg (328 aa).

The region spanning 2-160 (YNFKDSVNIT…LSVRLELFLV (159 aa)) is the Obg domain. Positions 161-326 (ADIGLVGLPN…LIKEFFILAK (166 aa)) constitute an OBG-type G domain. Residues 167-174 (GLPNAGKS), 192-196 (FTTKI), 213-216 (DIPG), 280-283 (NKLD), and 307-309 (SIY) each bind GTP. The Mg(2+) site is built by serine 174 and threonine 194.

Belongs to the TRAFAC class OBG-HflX-like GTPase superfamily. OBG GTPase family. As to quaternary structure, monomer. Mg(2+) is required as a cofactor.

It is found in the cytoplasm. In terms of biological role, an essential GTPase which binds GTP, GDP and possibly (p)ppGpp with moderate affinity, with high nucleotide exchange rates and a fairly low GTP hydrolysis rate. Plays a role in control of the cell cycle, stress response, ribosome biogenesis and in those bacteria that undergo differentiation, in morphogenesis control. The chain is GTPase Obg from Borreliella burgdorferi (strain ATCC 35210 / DSM 4680 / CIP 102532 / B31) (Borrelia burgdorferi).